A 721-amino-acid polypeptide reads, in one-letter code: MAYKSLNSITKSDIEALGISGDVSEKLLRDLEDIIHGSSTPPETWIQISRRILHPNLPFSFHQMMYYGCYKDFGPDLPAWIPDPKVASLTNVGKLLEKRGKEFLGGNYKNPVSSFSSFQEFSVSNPEVYWKTVLDELNILFSVPPKCILEKDTSGDNPGGKWLPGAYLNPARNCLTNGFKRRLDDIVIRWRDEGSDDLPVNTMTLLELRSQVWLAAHALSALGLEEESAIAVDMPMNVESVIIYLAIVLAGHVVVSIADSFSPREISTRLKISKAKAIFTQDVIIRGDKSIPLYRRVVDAEAPLAIVVPARGSSCRMKLREKDLSWNNFLGNARNLRGVEYVAAEKPAGAYTNILFSSGTTGEPKAIPWTNISPLKSAADAWCHLDVQRGDVVAWPTNLGWMMGPWLVYASLINGACMGLYNGSPLGPTFAKFVQDAEVSVLGVIPSIVRTWQNSNSTSGYDWSRIRCFGSTGEASNIDEYLWLMGRAHYKPVIEYCGGTEIGGSFISGSLLQPQSLAAFSTAAMGCKLFILDEDSNPIPPYAAGVGELALCPHMFGASSTLLNGNHFKVYFQGMPTFQGQILRRHGDLFERTSKGYYRAHGRADDTMNLGGIKVGSIEIERVCNSVDDSVLETAAIGVPPPSGGPEQLVIAVVFKSPEFSNPDLNLLKKSFNSEIQKKLNPLFKVSSVVTLPSLPRTATNKVMRRVLRQQLTQTGLNSKL.

A Microbody targeting signal motif is present at residues 719–721; that stretch reads SKL.

Belongs to the ATP-dependent AMP-binding enzyme family. In terms of tissue distribution, expressed in leaves, stems and developing seeds.

Its subcellular location is the peroxisome. Its function is as follows. May act as an acid--thiol ligase that activates carboxylic acids by forming acyl-CoAs. In Arabidopsis thaliana (Mouse-ear cress), this protein is Probable acyl-activating enzyme 17, peroxisomal (AAE17).